Consider the following 205-residue polypeptide: GTP cyclohydrolase-2 (205 aa).

49 to 53 (RLHSE) is a GTP binding site. Zn(2+) is bound by residues Cys54, Cys65, and Cys67. Residues Gln70, 92–94 (EGR), and Thr114 contribute to the GTP site. The active-site Proton acceptor is Asp126. The Nucleophile role is filled by Arg128. Thr149 and Lys154 together coordinate GTP.

This sequence belongs to the GTP cyclohydrolase II family. Requires Zn(2+) as cofactor.

The enzyme catalyses GTP + 4 H2O = 2,5-diamino-6-hydroxy-4-(5-phosphoribosylamino)-pyrimidine + formate + 2 phosphate + 3 H(+). The protein operates within cofactor biosynthesis; riboflavin biosynthesis; 5-amino-6-(D-ribitylamino)uracil from GTP: step 1/4. Catalyzes the conversion of GTP to 2,5-diamino-6-ribosylamino-4(3H)-pyrimidinone 5'-phosphate (DARP), formate and pyrophosphate. The protein is GTP cyclohydrolase-2 of Pseudomonas putida (strain ATCC 700007 / DSM 6899 / JCM 31910 / BCRC 17059 / LMG 24140 / F1).